Consider the following 311-residue polypeptide: R2-like ligand binding oxidase (311 aa).

Mn(2+) contacts are provided by Glu-68, Glu-101, and His-104. Positions 71-162 (VTQDIQPFMA…AAQVRASVTY (92 aa)) form a cross-link, 3-(O4'-tyrosyl)-valine (Val-Tyr). A Fe cation-binding site is contributed by Glu-101. Fe cation-binding residues include Glu-167, Glu-202, and His-205.

The protein belongs to the ribonucleoside diphosphate reductase small chain family. R2-like ligand binding oxidase subfamily. In terms of assembly, homodimer. Requires Fe cation as cofactor. It depends on Mn(2+) as a cofactor.

In terms of biological role, probable oxidase that might be involved in lipid metabolism. This is R2-like ligand binding oxidase from Mycolicibacterium paratuberculosis (strain ATCC BAA-968 / K-10) (Mycobacterium paratuberculosis).